The primary structure comprises 176 residues: Cytochrome b (176 aa).

Transmembrane regions (helical) follow at residues 33–53 (FGSLLGVCLMMQILTGLFLAM), 77–98 (WLLRYLHANGASMFFICLYLHI), and 113–133 (WNVGIILLFAVMATAFMGYVL). Heme b contacts are provided by His83 and His97.

The protein belongs to the cytochrome b family. The cytochrome bc1 complex contains 11 subunits: 3 respiratory subunits (MT-CYB, CYC1 and UQCRFS1), 2 core proteins (UQCRC1 and UQCRC2) and 6 low-molecular weight proteins (UQCRH/QCR6, UQCRB/QCR7, UQCRQ/QCR8, UQCR10/QCR9, UQCR11/QCR10 and a cleavage product of UQCRFS1). This cytochrome bc1 complex then forms a dimer. Heme b is required as a cofactor.

The protein resides in the mitochondrion inner membrane. In terms of biological role, component of the ubiquinol-cytochrome c reductase complex (complex III or cytochrome b-c1 complex) that is part of the mitochondrial respiratory chain. The b-c1 complex mediates electron transfer from ubiquinol to cytochrome c. Contributes to the generation of a proton gradient across the mitochondrial membrane that is then used for ATP synthesis. This is Cytochrome b (MT-CYB) from Promops centralis (Big crested mastiff bat).